Consider the following 389-residue polypeptide: Putative DNA processing protein DprA (389 aa).

The protein belongs to the DprA/Smf family.

Functionally, may help load RecA onto ssDNA. The polypeptide is Putative DNA processing protein DprA (Mycobacterium tuberculosis (strain CDC 1551 / Oshkosh)).